Here is a 636-residue protein sequence, read N- to C-terminus: ATP-dependent zinc metalloprotease FtsH 1 (636 aa).

Residues 1–18 (MKLSPPKKNLPPQKNNEP) are Cytoplasmic-facing. A helical membrane pass occupies residues 19 to 39 (PFPYLRLLVQVGIALFLVWIW). Residues 40–126 (QESLHKATVS…YGSVKPSLLS (87 aa)) are Periplasmic-facing. The helical transmembrane segment at 127–147 (QILFSWVVPILIFFLVWFALA) threads the bilayer. The Cytoplasmic segment spans residues 148–636 (RFMGGGGAGY…KEAPSYSSTL (489 aa)). 220 to 227 (GPPGTGKT) is a binding site for ATP. Residue His-442 participates in Zn(2+) binding. Glu-443 is a catalytic residue. Positions 446 and 519 each coordinate Zn(2+).

The protein in the central section; belongs to the AAA ATPase family. It in the C-terminal section; belongs to the peptidase M41 family. In terms of assembly, homohexamer. Requires Zn(2+) as cofactor.

The protein localises to the cell inner membrane. Its function is as follows. Acts as a processive, ATP-dependent zinc metallopeptidase for both cytoplasmic and membrane proteins. Plays a role in the quality control of integral membrane proteins. The polypeptide is ATP-dependent zinc metalloprotease FtsH 1 (Methylacidiphilum infernorum (isolate V4) (Methylokorus infernorum (strain V4))).